A 362-amino-acid chain; its full sequence is MAQVFNFSSGPAMLPAEVLKLAQQELRDWHGLGTSVMEISHRGKEFIQVAEEAEQDFRDLLNIPSNYKVLFCHGGGRGQFAGVPLNLLGDKTTADYVDAGYWAASAIKEAKKYCAPQIIDAKITVDGKRAVKPMREWQLSDNAAYLHYCPNETIDGIAIDETPDFGPEVVVTADFSSTILSAPLDVSRYGVIYAGAQKNIGPAGLTLVIVREDLLGKAHESCPSILDYTVLNDNDSMFNTPPTFAWYLSGLVFKWLKAQGGVAAMHKINQQKAELLYGVIDNSDFYRNDVAQANRSRMNVPFQLADNTLDKVFLEESFAAGLHALKGHRVVGGMRASIYNAMPIEGVKALTDFMIDFERRHG.

Residues serine 9 and arginine 42 each coordinate L-glutamate. Residues 76–77, tryptophan 102, threonine 153, aspartate 174, and glutamine 197 contribute to the pyridoxal 5'-phosphate site; that span reads GR. Lysine 198 carries the post-translational modification N6-(pyridoxal phosphate)lysine. 239–240 contributes to the pyridoxal 5'-phosphate binding site; the sequence is NT.

The protein belongs to the class-V pyridoxal-phosphate-dependent aminotransferase family. SerC subfamily. As to quaternary structure, homodimer. Pyridoxal 5'-phosphate serves as cofactor.

It is found in the cytoplasm. It catalyses the reaction O-phospho-L-serine + 2-oxoglutarate = 3-phosphooxypyruvate + L-glutamate. The catalysed reaction is 4-(phosphooxy)-L-threonine + 2-oxoglutarate = (R)-3-hydroxy-2-oxo-4-phosphooxybutanoate + L-glutamate. It functions in the pathway amino-acid biosynthesis; L-serine biosynthesis; L-serine from 3-phospho-D-glycerate: step 2/3. Its pathway is cofactor biosynthesis; pyridoxine 5'-phosphate biosynthesis; pyridoxine 5'-phosphate from D-erythrose 4-phosphate: step 3/5. Catalyzes the reversible conversion of 3-phosphohydroxypyruvate to phosphoserine and of 3-hydroxy-2-oxo-4-phosphonooxybutanoate to phosphohydroxythreonine. This Salmonella choleraesuis (strain SC-B67) protein is Phosphoserine aminotransferase.